The following is a 375-amino-acid chain: Thioredoxin reductase 1, mitochondrial (375 aa).

Residues methionine 1–phenylalanine 37 constitute a mitochondrion transit peptide. Residues serine 58–alanine 61, phenylalanine 79–glutamate 80, isoleucine 87–glutamine 92, asparagine 101, valine 134, cysteine 192, aspartate 337, and arginine 344–alanine 346 each bind FAD. Cysteines 189 and 192 form a disulfide.

This sequence belongs to the class-II pyridine nucleotide-disulfide oxidoreductase family. In terms of assembly, homodimer. FAD serves as cofactor. Ubiquitous.

Its subcellular location is the cytoplasm. It localises to the mitochondrion. It catalyses the reaction [thioredoxin]-dithiol + NADP(+) = [thioredoxin]-disulfide + NADPH + H(+). Functionally, NADPH-dependent thioredoxin-disulfide reductase that reduces thioredoxins O1, O2 and F3. The protein is Thioredoxin reductase 1, mitochondrial (NTR1) of Arabidopsis thaliana (Mouse-ear cress).